The sequence spans 793 residues: Ankyrin repeat domain-containing protein SOWAHB (793 aa).

Disordered regions lie at residues 83-185 (EEGL…QARA), 219-290 (ATAE…ELLT), 337-360 (QLPLEPGSTEPNSEPPDPCLSSHS), and 396-543 (DFVD…SPRV). 3 stretches are compositionally biased toward low complexity: residues 96 to 108 (APSAGGAAPCSPR), 134 to 144 (AGAAARAADAA), and 175 to 185 (AAAAAGAQARA). At Ser106 the chain carries Phosphoserine. Basic and acidic residues predominate over residues 220 to 244 (TAEEKPARALPAQDDRGASREREEG). Residues 246-273 (LAEPAPVPAVAHSPPATVEAATSRASPP) show a composition bias toward low complexity. Residue Ser271 is modified to Phosphoserine. Residues 396-406 (DFVDQESDGSE) are compositionally biased toward acidic residues. Composition is skewed to low complexity over residues 407 to 417 (ESSSGPKDSPG) and 498 to 508 (RSSLAGRAKLS). Over residues 521–533 (KRSRRPPRSRKPS) the composition is skewed to basic residues. ANK repeat units follow at residues 630–659 (TGYTALHWIAKHGDLRALQDLVSGAKKAGI) and 669–699 (CGYTPLHLAAIHGHQGVIKLLVQRLASRVNV). Ser761 carries the phosphoserine modification.

Belongs to the SOWAH family.

This Homo sapiens (Human) protein is Ankyrin repeat domain-containing protein SOWAHB (SOWAHB).